A 682-amino-acid chain; its full sequence is Potassium-transporting ATPase ATP-binding subunit (682 aa).

4 helical membrane-spanning segments follow: residues 34 to 54 (PVMF…LAMV), 58 to 78 (IAGS…TVLF), 219 to 239 (IALT…TATL), and 254 to 274 (VLVA…LSAI). The 4-aspartylphosphate intermediate role is filled by aspartate 307. Residues aspartate 344, glutamate 348, 377–384 (FTAQSRMS), and lysine 395 each bind ATP. Residues aspartate 518 and aspartate 522 each coordinate Mg(2+). The next 3 membrane-spanning stretches (helical) occupy residues 588-608 (FAII…LNVM), 616-636 (AILS…PLAL), and 662-682 (LVVP…LGLA).

Belongs to the cation transport ATPase (P-type) (TC 3.A.3) family. Type IA subfamily. As to quaternary structure, the system is composed of three essential subunits: KdpA, KdpB and KdpC.

It localises to the cell inner membrane. The enzyme catalyses K(+)(out) + ATP + H2O = K(+)(in) + ADP + phosphate + H(+). Part of the high-affinity ATP-driven potassium transport (or Kdp) system, which catalyzes the hydrolysis of ATP coupled with the electrogenic transport of potassium into the cytoplasm. This subunit is responsible for energy coupling to the transport system and for the release of the potassium ions to the cytoplasm. This is Potassium-transporting ATPase ATP-binding subunit from Salmonella choleraesuis (strain SC-B67).